The sequence spans 215 residues: Small ribosomal subunit protein uS5 (215 aa).

A disordered region spans residues 1–62 (MTDSSPQSNP…QERDSEWQER (62 aa)). Positions 9-28 (NPNAVPGAADVPAAAEGQQQ) are enriched in low complexity. Basic and acidic residues predominate over residues 29-61 (EQRRGGGRGERGDRRGGRRGDRRNQERDSEWQE). An S5 DRBM domain is found at 59–122 (WQERVVQIRR…ADGKKHLVKV (64 aa)).

Belongs to the universal ribosomal protein uS5 family. Part of the 30S ribosomal subunit. Contacts proteins S4 and S8.

Functionally, with S4 and S12 plays an important role in translational accuracy. Located at the back of the 30S subunit body where it stabilizes the conformation of the head with respect to the body. This is Small ribosomal subunit protein uS5 from Parasynechococcus marenigrum (strain WH8102).